Here is a 228-residue protein sequence, read N- to C-terminus: Thermonuclease (228 aa).

The first 23 residues, 1–23 (MTEYLLSAGICMAIVSILLIGMA), serve as a signal peptide directing secretion. Positions 24 to 60 (ISNVSKGQYAKRFFYFATSCLVLTLVVVSSLSSSANA) are excised as a propeptide. Residues 58 to 70 (ANASQTDNGVNRS) are compositionally biased toward polar residues. The interval 58–83 (ANASQTDNGVNRSGSEDPTVYSATST) is disordered. Asp100 lines the Ca(2+) pocket. The active site involves Arg114. Ca(2+) contacts are provided by Asp119 and Thr120. Residues Glu122 and Arg166 contribute to the active site.

It belongs to the thermonuclease family. Requires Ca(2+) as cofactor.

Its subcellular location is the secreted. The catalysed reaction is Endonucleolytic cleavage to nucleoside 3'-phosphates and 3'-phosphooligonucleotide end-products.. Functionally, enzyme that catalyzes the hydrolysis of both DNA and RNA at the 5' position of the phosphodiester bond. In Staphylococcus aureus (strain COL), this protein is Thermonuclease (nuc).